The following is a 739-amino-acid chain: Polyribonucleotide nucleotidyltransferase (739 aa).

2 residues coordinate Mg(2+): D489 and D495. The KH domain occupies 556-615 (PKIDTIKIDVDKIKIVIGKGGETIDKIIAETGVKIDIDEDGLVAIFSPDRAAIERTKEII). The S1 motif domain maps to 625–693 (DEVFQAKVVR…DKGRIDASMK (69 aa)). A disordered region spans residues 699–739 (PEGYVEPEKRERSEKPRRHKEHKEKKDNNFGEFKFHKVDKK). Basic and acidic residues predominate over residues 722–739 (EKKDNNFGEFKFHKVDKK).

This sequence belongs to the polyribonucleotide nucleotidyltransferase family. Mg(2+) is required as a cofactor.

It is found in the cytoplasm. The enzyme catalyses RNA(n+1) + phosphate = RNA(n) + a ribonucleoside 5'-diphosphate. Functionally, involved in mRNA degradation. Catalyzes the phosphorolysis of single-stranded polyribonucleotides processively in the 3'- to 5'-direction. In Streptococcus suis (strain 98HAH33), this protein is Polyribonucleotide nucleotidyltransferase.